A 490-amino-acid polypeptide reads, in one-letter code: Polyamine oxidase 2 (490 aa).

FAD-binding residues include E57, R65, V246, and E433. The Microbody targeting signal signature appears at 488 to 490 (SRL).

Belongs to the flavin monoamine oxidase family. The cofactor is FAD. As to expression, highly expressed in flowers and siliques. Also found in leaf and stem and in low levels in cotyledons, roots and in seedlings.

The protein resides in the peroxisome. It carries out the reaction spermine + O2 + H2O = 3-aminopropanal + spermidine + H2O2. The catalysed reaction is N(1)-acetylspermine + O2 + H2O = 3-acetamidopropanal + spermidine + H2O2. The enzyme catalyses spermidine + O2 + H2O = 3-aminopropanal + putrescine + H2O2. It participates in amine and polyamine degradation; spermine degradation. Its pathway is amine and polyamine degradation; spermidine degradation. Flavoenzyme involved in polyamine back-conversion. Catalyzes the oxidation of the secondary amino group of polyamines, such as spermine, spermidine and their acetyl derivatives. Substrate preference is N(1)-acetylspermine &gt; spermine &gt; spermidine. Plays an important role in the regulation of polyamine intracellular concentration. Involved in abscisic acid-mediated developmental processes. May contribute to nitric oxide-mediated effects on root growth. This Arabidopsis thaliana (Mouse-ear cress) protein is Polyamine oxidase 2.